The sequence spans 1235 residues: MMDNDDALLNNGGPQSGAETVYGTEDNNMVMSEKNDQVVSIVQQLAGSIYQEFERMINRYDEDVVKNLMPLLVNVLECLDASYRINQEQDVELELLREDNEQLVTQYEREKSARKQSEQKLLEAEDLAEQENKELATRLESVESIVRMLELKHKNSLEHASRLEERETDLKKEYNKLHERYTELFKNHVDYMERTKMLMGSTHSQMSTASDRMEVSRARLNPVARSSGPVSYGFASLENSVMLDTETICSVGSQSDDSGPPSLQNELDMSLPSTAERGAATDSLQQQHQATSPQSPPDTSPVVPNVPPANVGRSTTKKEQRSDNNLYQELSFQDNEESEENEIVTGCWVHPGEYASSANDNYFGMGKEVENLIMENNELLATKNALNIVKDDLIVKVDELTGEVEIVREELSAMQQSRTKLRQRISELEEELKKTKEQVKQQNTEQEENDVPLAQRKRFTRVEMAMVLMERNQYKERLMELQEAVRLTEILRASRTVDNLDKKSKQSIWKYFSNLFTPSNRPTERIADGLGGGPMFRNTGGGSPAHSHGSPSRGSGDNRLTLAGSQPPMHPASAGLANALVMPKDYSEDGGSERISARRREQYRQLRAHVQKEDGRLHAYGWSLPINKANQEANPSRHSGGVPVPVYCNPLAEASPHMKVFCAAGVNLHGGFTKDGQSLIPADSPYAPKSTLKITEITSPTAEQSVEALDRQIARASLETLEPETQLSSFVWICTSTHAASTVSVVDANQSATVLDAFPICSSHLLCIASVQGAMESDYALLEQSEVVKAGEMLQRPGEGTELLGKVEFVRVKPKSEDEQNSNSKPQQQQQDEEEAKEATEKSNEPLPPVNAEEPLVNVEAIKIRQALPGAPQRLSSGNSGSDGNQANNNNSSSTGSVLFATKSLNPILGTKEREDPPMTSVGPTMWMGAQDGWLYVHSGVGRWHECLHRVLLPDAVLAIVHVEARVVVALANAQLAVFRRQTDGQWDLNSYHLVTLGDRNHSIRCLCVAGERIWAAHRNKIFIVDPISLNIVHSLDAHPRKESQVRQMAATGAGVWVSIRLDSTLRLYNTHTFEHKQDVDIEPYVSKMLGTGKLGFSFVRITALMVSCNRLWIGTSNGVIISVPLAEVQQKTSSDPHGQMPLCCMANAQLSFHGHRDAVKFFVSVPMLQQPNLNGGLTFVNKRPDMLVMCGGEGYIDFRINDNDMENSIQLEPNQTIENRGDKSYLIVWHVSQR.

The segment at 1–22 (MMDNDDALLNNGGPQSGAETVY) is disordered. One can recognise an RH1 domain in the interval 25–113 (EDNNMVMSEK…VTQYEREKSA (89 aa)). Residues 84-184 (RINQEQDVEL…NKLHERYTEL (101 aa)) are a coiled coil. The tract at residues 278 to 325 (GAATDSLQQQHQATSPQSPPDTSPVVPNVPPANVGRSTTKKEQRSDNN) is disordered. Residues 282 to 293 (DSLQQQHQATSP) show a composition bias toward polar residues. Positions 294–307 (QSPPDTSPVVPNVP) are enriched in pro residues. Residues 366–493 (GKEVENLIME…AVRLTEILRA (128 aa)) adopt a coiled-coil conformation. In terms of domain architecture, RH2 spans 456–526 (RKRFTRVEMA…TPSNRPTERI (71 aa)). 3 disordered regions span residues 520 to 572 (NRPT…MHPA), 813 to 852 (KPKS…PVNA), and 869 to 897 (PGAP…STGS). Positions 529-543 (GLGGGPMFRNTGGGS) are enriched in gly residues. Low complexity-rich tracts occupy residues 544–555 (PAHSHGSPSRGS) and 821–830 (NSNSKPQQQQ). A compositionally biased stretch (polar residues) spans 874–897 (RLSSGNSGSDGNQANNNNSSSTGS).

The protein belongs to the JIP scaffold family. Forms homo- and heterooligomeric complexes. Binds the TPR motif-containing C-terminal of kinesin light chain, Klc. Pre-assembled syd scaffolding complexes are then transported as a cargo of kinesin, to the required subcellular location.

The protein resides in the cytoplasm. In terms of biological role, the JNK-interacting protein (JIP) group of scaffold proteins selectively mediates JNK-signaling by aggregating specific components of the MAPK cascade to form a functional JNK signaling module. May function as a regulator of vesicle transport, through interactions with the JNK-signaling components and motor proteins. Syd is required for efficient kinesin-I mediated axonal transport. This chain is JNK-interacting protein 3, found in Drosophila pseudoobscura pseudoobscura (Fruit fly).